The following is a 301-amino-acid chain: Acetylglutamate kinase (301 aa).

Substrate contacts are provided by residues 68–69 (GG), Arg90, and Asn195.

This sequence belongs to the acetylglutamate kinase family. ArgB subfamily.

Its subcellular location is the cytoplasm. The catalysed reaction is N-acetyl-L-glutamate + ATP = N-acetyl-L-glutamyl 5-phosphate + ADP. It functions in the pathway amino-acid biosynthesis; L-arginine biosynthesis; N(2)-acetyl-L-ornithine from L-glutamate: step 2/4. Its function is as follows. Catalyzes the ATP-dependent phosphorylation of N-acetyl-L-glutamate. This chain is Acetylglutamate kinase, found in Pseudomonas fluorescens (strain Pf0-1).